The chain runs to 79 residues: Metallothionein-like protein type 2 (79 aa).

This sequence belongs to the metallothionein superfamily. Type 15 family.

Functionally, metallothioneins have a high content of cysteine residues that bind various heavy metals. In Malus domestica (Apple), this protein is Metallothionein-like protein type 2 (MT1).